The following is a 70-amino-acid chain: DNA-directed RNA polymerase subunit omega (70 aa).

The protein belongs to the RNA polymerase subunit omega family. The RNAP catalytic core consists of 2 alpha, 1 beta, 1 beta' and 1 omega subunit. When a sigma factor is associated with the core the holoenzyme is formed, which can initiate transcription.

It catalyses the reaction RNA(n) + a ribonucleoside 5'-triphosphate = RNA(n+1) + diphosphate. In terms of biological role, promotes RNA polymerase assembly. Latches the N- and C-terminal regions of the beta' subunit thereby facilitating its interaction with the beta and alpha subunits. The polypeptide is DNA-directed RNA polymerase subunit omega (Bacillus cereus (strain B4264)).